Consider the following 303-residue polypeptide: 2-dehydropantoate 2-reductase (303 aa).

NADP(+) contacts are provided by residues 7-12, Lys78, Asn103, and Ala129; that span reads GPGSLG. The active-site Proton donor is the Lys185. Residues Lys185, Asn189, Asn193, Asn203, and 252 to 255 each bind substrate; that span reads NESS. Glu267 provides a ligand contact to NADP(+).

It belongs to the ketopantoate reductase family.

It localises to the cytoplasm. It carries out the reaction (R)-pantoate + NAD(+) = 2-dehydropantoate + NADH + H(+). The enzyme catalyses (R)-pantoate + NADP(+) = 2-dehydropantoate + NADPH + H(+). Its pathway is cofactor biosynthesis; coenzyme A biosynthesis. Functionally, catalyzes the NAD(P)H-dependent reduction of ketopantoate into pantoic acid. The polypeptide is 2-dehydropantoate 2-reductase (Halobacterium salinarum (strain ATCC 700922 / JCM 11081 / NRC-1) (Halobacterium halobium)).